The following is a 316-amino-acid chain: MTNFKLKIASRRSKLAMVQTLWVKDQLEKNIPNLEVSIEAMATQGDKILDVALAKIGDKGLFTKELEAQMLVGQADIAVHSLKDLPTNLPSGLKLGCITKREDPADALVVSKKNDCYKLETLPAGSIVGTSSLRRLAQLRNKYPHLNFKDIRGNVITRIEKLDAGEFDCIILAAAGLKRLGFESRIHQIIPNEISLHAVGQGALGIECKSDDKKVLEIISVLEDKPTSQRCLAERAFLRELEGGCQVPIGVNSSIQNEQLYLTGMVASLDGERLIKDQYIGNIDDPEQVGKELAKKLKLQGADKILSEIFEQFREN.

S-(dipyrrolylmethanemethyl)cysteine is present on cysteine 245.

Belongs to the HMBS family. Monomer. Dipyrromethane is required as a cofactor.

The enzyme catalyses 4 porphobilinogen + H2O = hydroxymethylbilane + 4 NH4(+). It functions in the pathway porphyrin-containing compound metabolism; protoporphyrin-IX biosynthesis; coproporphyrinogen-III from 5-aminolevulinate: step 2/4. Its pathway is porphyrin-containing compound metabolism; chlorophyll biosynthesis. Functionally, tetrapolymerization of the monopyrrole PBG into the hydroxymethylbilane pre-uroporphyrinogen in several discrete steps. The chain is Porphobilinogen deaminase from Prochlorococcus marinus (strain MIT 9312).